Reading from the N-terminus, the 175-residue chain is uncharacterized protein (175 aa).

Residues 10–157 form the HTH marR-type domain; that stretch reads LFELYAELIH…AERLFRDLVT (148 aa). The H-T-H motif DNA-binding region spans 68–91; that stretch reads VTSIAEKMNTTKATVSRISTKLLG.

The protein resides in the cytoplasm. This is an uncharacterized protein from Bacillus subtilis (strain 168).